The primary structure comprises 329 residues: MTKIYDAANWSKHEDDFTQMFYNQNVKQFWLPEEIALNGDLLTWKYLGKNEQDTYMKVLAGLTLLDTEQGNTGMPIVAEHVDGHQRKAVLNFMAMMENAVHAKSYSNIFMTLAPTETINEVFEWVKQNKYLQKKAQMIVGLYKAIQKDDEISLFKAMVASVYLESFLFYSGFYYPLYFYGQGKLMQSGEIINLILRDEAIHGVYVGLLAQEIYNKQTEEKKAELREFAIDLLNQLYENELEYTEDLYDQVGLSHDVKKFIRYNANKALMNLGFDPYFEEEDINPIVLNGLNTKTKSHDFFSMKGNGYKKATVEPLKDDDFYFEDEKEQI.

Residues aspartate 66, glutamate 97, and histidine 101 each coordinate Fe cation. Tyrosine 105 is a catalytic residue. Glutamate 164, glutamate 198, and histidine 201 together coordinate Fe cation.

This sequence belongs to the ribonucleoside diphosphate reductase small chain family. As to quaternary structure, tetramer of two alpha and two beta subunits. Fe cation serves as cofactor.

The enzyme catalyses a 2'-deoxyribonucleoside 5'-diphosphate + [thioredoxin]-disulfide + H2O = a ribonucleoside 5'-diphosphate + [thioredoxin]-dithiol. Functionally, provides the precursors necessary for DNA synthesis. Catalyzes the biosynthesis of deoxyribonucleotides from the corresponding ribonucleotides. This Bacillus subtilis (strain 168) protein is Ribonucleoside-diphosphate reductase subunit beta (nrdF).